We begin with the raw amino-acid sequence, 399 residues long: P2X purinoceptor 1 (399 aa).

Topologically, residues Met-1–Lys-28 are cytoplasmic. Residues Val-29 to Val-50 traverse the membrane as a helical segment. The Extracellular portion of the chain corresponds to Tyr-51 to Gly-338. Positions 68, 70, and 140 each coordinate CTP. Lys-70 contributes to the ATP binding site. Intrachain disulfides connect Cys-117-Cys-165, Cys-126-Cys-149, and Cys-132-Cys-159. Asn-153 and Asn-184 each carry an N-linked (GlcNAc...) asparagine glycan. CTP is bound at residue Thr-186. Thr-186 is a binding site for ATP. N-linked (GlcNAc...) asparagine glycosylation is present at Asn-210. 2 disulfides stabilise this stretch: Cys-217-Cys-227 and Cys-261-Cys-270. ATP contacts are provided by Ser-286, Asn-290, and Arg-292. CTP is bound by residues Asn-290 and Arg-292. Asn-300 carries N-linked (GlcNAc...) asparagine glycosylation. Lys-309 is a CTP binding site. ATP is bound at residue Lys-309. Residues Thr-331 to Gly-338 form a pore-forming motif region. The helical transmembrane segment at Ile-339–Pro-358 threads the bilayer. Over Lys-359–Ser-399 the chain is Cytoplasmic. A disordered region spans residues Met-374–Ser-399. Residues Ala-385–Ser-399 show a composition bias toward polar residues. Phosphoserine occurs at positions 387 and 388. The residue at position 389 (Thr-389) is a Phosphothreonine.

Belongs to the P2X receptor family. In terms of assembly, functional P2XRs are organized as homomeric and heteromeric trimers. Homotrimer. Forms heterodimer with P2RX2. Forms heterodimer with P2RX4. Forms heterodimer with P2RX5. High levels in vas deferens and urinary bladder. Lower extent in spinal cord, coeliac ganglion, lung and spleen (probably in the smooth muscle part of both organs).

It is found in the cell membrane. The enzyme catalyses Ca(2+)(in) = Ca(2+)(out). It carries out the reaction K(+)(in) = K(+)(out). The catalysed reaction is Na(+)(in) = Na(+)(out). With respect to regulation, activated by low concentrations of ATP (&lt;1 uM). Undergoes rapid desensitisation. Sensitives to the ATP agonist:alpha/beta-methylene-ATP. Modulated by cholesterol. In terms of biological role, ATP-gated nonselective transmembrane cation channel permeable to potassium, sodium and with relatively high calcium permeability. Furthermore, CTP functions as a weak affinity agonist for P2RX1. Plays a role a role in urogenital, immune and cardiovascular function. Specifically, plays an important role in neurogenic contraction of smooth muscle of the vas deferens, and therefore is essential for normal male reproductive function. In addition, contributes to smooth muscle contractions of the urinary bladder. On platelets, contributes to platelet activation and aggregation and thereby, also to thrombosis. On neutrophils, it is involved in chemotaxis and in mitigating the activation of circulating cells. This chain is P2X purinoceptor 1 (P2rx1), found in Rattus norvegicus (Rat).